We begin with the raw amino-acid sequence, 154 residues long: Fucose mutarotase (154 aa).

The active-site Proton donor is the H24. Residue D32 coordinates substrate. Residue D69 is part of the active site. M79, Y120, Y138, and N140 together coordinate substrate. Y120 is a catalytic residue.

It belongs to the RbsD / FucU family. Mainly homodimer, but also exists as homotetramer, homooctamer, and homodecamer. The homodimeric form seems catalytically inactive.

The enzyme catalyses alpha-L-fucose = beta-L-fucose. Its pathway is carbohydrate metabolism; L-fucose metabolism. Functionally, involved in the interconversion between alpha- and beta-L-fucoses. L-Fucose (6-deoxy-L-galactose) exists as alpha-L-fucose (29.5%) and beta-L-fucose (70.5%), the beta-form is metabolized through the salvage pathway. GDP-L-fucose formed either by the de novo or salvage pathways is transported into the endoplasmic reticulum, where it serves as a substrate for N- and O-glycosylations by fucosyltransferases. Fucosylated structures expressed on cell surfaces or secreted in biological fluids are believed to play a critical role in cell-cell adhesion and recognition processes. The chain is Fucose mutarotase (FUOM) from Homo sapiens (Human).